Here is a 203-residue protein sequence, read N- to C-terminus: uncharacterized protein (203 aa).

The tract at residues 174-203 (LASSKNPRARSPGLDPLGSSETLWSHRGGH) is disordered.

This is an uncharacterized protein from Homo sapiens (Human).